Reading from the N-terminus, the 291-residue chain is Diaminopimelate epimerase (291 aa).

Asparagine 13, glutamine 46, and asparagine 66 together coordinate substrate. Cysteine 75 (proton donor) is an active-site residue. Substrate-binding positions include 76–77, asparagine 156, asparagine 189, and 207–208; these read GN and ER. Cysteine 216 functions as the Proton acceptor in the catalytic mechanism. Residue 217–218 participates in substrate binding; it reads GS.

This sequence belongs to the diaminopimelate epimerase family. As to quaternary structure, homodimer.

Its subcellular location is the cytoplasm. It catalyses the reaction (2S,6S)-2,6-diaminopimelate = meso-2,6-diaminopimelate. It participates in amino-acid biosynthesis; L-lysine biosynthesis via DAP pathway; DL-2,6-diaminopimelate from LL-2,6-diaminopimelate: step 1/1. Catalyzes the stereoinversion of LL-2,6-diaminopimelate (L,L-DAP) to meso-diaminopimelate (meso-DAP), a precursor of L-lysine and an essential component of the bacterial peptidoglycan. The sequence is that of Diaminopimelate epimerase from Rhodospirillum centenum (strain ATCC 51521 / SW).